We begin with the raw amino-acid sequence, 235 residues long: 5'-methylthioadenosine/S-adenosylhomocysteine nucleosidase (235 aa).

Catalysis depends on E12, which acts as the Proton acceptor. Substrate contacts are provided by residues G78, M153, and 174–175; that span reads ME. The active-site Proton donor is the D198.

It belongs to the PNP/UDP phosphorylase family. MtnN subfamily.

It carries out the reaction S-adenosyl-L-homocysteine + H2O = S-(5-deoxy-D-ribos-5-yl)-L-homocysteine + adenine. The catalysed reaction is S-methyl-5'-thioadenosine + H2O = 5-(methylsulfanyl)-D-ribose + adenine. It catalyses the reaction 5'-deoxyadenosine + H2O = 5-deoxy-D-ribose + adenine. It functions in the pathway amino-acid biosynthesis; L-methionine biosynthesis via salvage pathway; S-methyl-5-thio-alpha-D-ribose 1-phosphate from S-methyl-5'-thioadenosine (hydrolase route): step 1/2. Catalyzes the irreversible cleavage of the glycosidic bond in both 5'-methylthioadenosine (MTA) and S-adenosylhomocysteine (SAH/AdoHcy) to adenine and the corresponding thioribose, 5'-methylthioribose and S-ribosylhomocysteine, respectively. Also cleaves 5'-deoxyadenosine, a toxic by-product of radical S-adenosylmethionine (SAM) enzymes, into 5-deoxyribose and adenine. This is 5'-methylthioadenosine/S-adenosylhomocysteine nucleosidase from Geobacillus kaustophilus (strain HTA426).